Here is a 519-residue protein sequence, read N- to C-terminus: uncharacterized protein (519 aa).

Positions 477-486 (IKRERAHVTQ) are enriched in basic residues. The disordered stretch occupies residues 477–519 (IKRERAHVTQRNKPPPSGGDTAVAEGFEPPDGVSRLSLSRRVH).

This is an uncharacterized protein from Mycobacterium tuberculosis (strain ATCC 25618 / H37Rv).